The following is a 267-amino-acid chain: Hydroxyethylthiazole kinase 2 (267 aa).

Substrate is bound at residue methionine 41. Lysine 116 and threonine 166 together coordinate ATP. A substrate-binding site is contributed by glycine 193.

It belongs to the Thz kinase family. The cofactor is Mg(2+).

The enzyme catalyses 5-(2-hydroxyethyl)-4-methylthiazole + ATP = 4-methyl-5-(2-phosphooxyethyl)-thiazole + ADP + H(+). It participates in cofactor biosynthesis; thiamine diphosphate biosynthesis; 4-methyl-5-(2-phosphoethyl)-thiazole from 5-(2-hydroxyethyl)-4-methylthiazole: step 1/1. Its function is as follows. Catalyzes the phosphorylation of the hydroxyl group of 4-methyl-5-beta-hydroxyethylthiazole (THZ). The polypeptide is Hydroxyethylthiazole kinase 2 (Streptococcus pneumoniae (strain Hungary19A-6)).